Consider the following 297-residue polypeptide: MKRPDYRTLQALDAVIRERGFERAAQKLCITQSAVSQRIKQLENTFGQPLLVRTVPPRPTEQGQKLLALLRQVELLEEEWLGDEQTGSTPLLLSLAVNADSLATWLLPALAPVLADSPVRLNLQVEDETRTQERLRRGEVVGAVSIQPQALPSCLVDQLGALDYLFVASKPFADRYFPNGVTRASLLKAPAVAFDHLDDMHQAFLQQNFDLPPGSVPCHIVNSSEAFVQLARQGTTCCMIPHLQIEKELQSGELIDLTPGLYQRRMLFWHRFAPESRMMRKVTDALLEYGHKVLRQD.

The HTH lysR-type domain maps to 4–60 (PDYRTLQALDAVIRERGFERAAQKLCITQSAVSQRIKQLENTFGQPLLVRTVPPRPT). Residues 21–40 (FERAAQKLCITQSAVSQRIK) constitute a DNA-binding region (H-T-H motif).

It belongs to the LysR transcriptional regulatory family. Homodimer.

Functionally, controls the transcription of genes involved in arginine and lysine metabolism. This chain is HTH-type transcriptional regulator ArgP, found in Cronobacter sakazakii (strain ATCC BAA-894) (Enterobacter sakazakii).